A 156-amino-acid polypeptide reads, in one-letter code: ATP synthase subunit b (156 aa).

Residues 11 to 31 (LIAFVVFVIFCMKYVWPPIIG) form a helical membrane-spanning segment.

This sequence belongs to the ATPase B chain family. As to quaternary structure, F-type ATPases have 2 components, F(1) - the catalytic core - and F(0) - the membrane proton channel. F(1) has five subunits: alpha(3), beta(3), gamma(1), delta(1), epsilon(1). F(0) has three main subunits: a(1), b(2) and c(10-14). The alpha and beta chains form an alternating ring which encloses part of the gamma chain. F(1) is attached to F(0) by a central stalk formed by the gamma and epsilon chains, while a peripheral stalk is formed by the delta and b chains.

It localises to the cell inner membrane. F(1)F(0) ATP synthase produces ATP from ADP in the presence of a proton or sodium gradient. F-type ATPases consist of two structural domains, F(1) containing the extramembraneous catalytic core and F(0) containing the membrane proton channel, linked together by a central stalk and a peripheral stalk. During catalysis, ATP synthesis in the catalytic domain of F(1) is coupled via a rotary mechanism of the central stalk subunits to proton translocation. Functionally, component of the F(0) channel, it forms part of the peripheral stalk, linking F(1) to F(0). This chain is ATP synthase subunit b, found in Colwellia psychrerythraea (strain 34H / ATCC BAA-681) (Vibrio psychroerythus).